The following is a 700-amino-acid chain: Inhibitor of carbonic anhydrase (700 aa).

A signal peptide spans 1 to 19 (MRLLICALLCLGTLGLCLA). Transferrin-like domains follow at residues 25 to 347 (IRWC…NLKR) and 355 to 685 (VKWC…NFRQ). Intrachain disulfides connect Cys-28–Cys-67, Cys-38–Cys-58, Cys-137–Cys-213, Cys-172–Cys-188, Cys-175–Cys-198, Cys-185–Cys-196, Cys-246–Cys-260, Cys-358–Cys-390, Cys-368–Cys-381, Cys-415–Cys-695, Cys-438–Cys-658, Cys-470–Cys-545, Cys-494–Cys-686, Cys-504–Cys-518, Cys-515–Cys-528, and Cys-585–Cys-599. Asn-664 carries an N-linked (GlcNAc...) asparagine glycan.

Belongs to the transferrin family. As to quaternary structure, monomer. Interacts (via transferrin-like domain 2) with CA2. Post-translationally, N-glycosylated. In terms of tissue distribution, detected in blood plasma, heart, kidney, liver, colon, lung, spleen, pancreas and testis (at protein level).

Its subcellular location is the secreted. Inhibitor for carbonic anhydrase 2 (CA2). Does not bind iron ions. The chain is Inhibitor of carbonic anhydrase from Mus musculus (Mouse).